Reading from the N-terminus, the 81-residue chain is Putative membrane protein insertion efficiency factor (81 aa).

The disordered stretch occupies residues 61–81 (NDGGFDPVPPAPSSRTSSIAE).

It belongs to the UPF0161 family.

The protein resides in the cell inner membrane. In terms of biological role, could be involved in insertion of integral membrane proteins into the membrane. The chain is Putative membrane protein insertion efficiency factor from Pseudomonas entomophila (strain L48).